Here is a 1428-residue protein sequence, read N- to C-terminus: DNA topoisomerase 2 (1428 aa).

Residues N70, N99, 127–129, and 140–147 contribute to the ATP site; these read SSN and GRNGYGAK. Positions 333-336 are interaction with DNA; that stretch reads KKKK. 365–367 contacts ATP; the sequence is QTK. In terms of domain architecture, Toprim spans 443–557; sequence CTLVLTEGDS…GLLDIQGFLL (115 aa). Positions 449, 526, and 528 each coordinate Mg(2+). The region spanning 692–1159 is the Topo IIA-type catalytic domain; the sequence is IPNVLDGFKP…SAKDIWNTDL (468 aa). The active-site O-(5'-phospho-DNA)-tyrosine intermediate is the Y782. The interval 965–974 is interaction with DNA; that stretch reads KLISPISLMN. Disordered regions lie at residues 1083–1102, 1176–1217, 1240–1288, and 1303–1428; these read KGATSDEEDEESSHEDTENV, ARGG…RKGK, KAPT…ELSK, and MGST…NEED. T1086 is modified (phosphothreonine; by CK2). S1087 bears the Phosphoserine; by CK2 mark. A compositionally biased stretch (basic residues) spans 1207–1217; it reads KNKKSTARKGK. S1252 is modified (phosphoserine). A Phosphothreonine; by CK2 modification is found at T1258. Residues S1266, S1269, and S1272 each carry the phosphoserine; by CK2 modification. Over residues 1275-1286 the composition is skewed to basic and acidic residues; it reads DIKKEDKDEGEL. Residues 1332–1347 are compositionally biased toward basic residues; it reads TAVKPKLAKKPVRKQQ. 4 positions are modified to phosphoserine; by CK2: S1353, S1356, S1408, and S1423. Residues 1403-1428 show a composition bias toward acidic residues; the sequence is ELSDDSFIEDDEEENQGSDVSFNEED.

Belongs to the type II topoisomerase family. Homodimer. Requires Mg(2+) as cofactor. The cofactor is Mn(2+). Ca(2+) is required as a cofactor. In terms of processing, phosphorylation enhances the activity. Stimulates decatenation activity.

It localises to the nucleus. It carries out the reaction ATP-dependent breakage, passage and rejoining of double-stranded DNA.. In terms of biological role, control of topological states of DNA by transient breakage and subsequent rejoining of DNA strands. Topoisomerase II makes double-strand breaks. Essential during mitosis and meiosis for proper segregation of daughter chromosomes. This Saccharomyces cerevisiae (strain ATCC 204508 / S288c) (Baker's yeast) protein is DNA topoisomerase 2 (TOP2).